The following is a 372-amino-acid chain: Carbamoyl phosphate synthase small chain (372 aa).

Residues 1 to 179 (MRAILALEDG…ALVTGKTLPP (179 aa)) form a CPSase region. L-glutamine is bound by residues Ser45, Gly231, and Gly233. Residues 183 to 369 (DIVAFDFGIK…RKMIAASKRQ (187 aa)) form the Glutamine amidotransferase type-1 domain. Cys258 (nucleophile) is an active-site residue. L-glutamine contacts are provided by Leu259, Gln262, Asn300, Gly302, and Phe303. Residues His342 and Glu344 contribute to the active site.

The protein belongs to the CarA family. In terms of assembly, composed of two chains; the small (or glutamine) chain promotes the hydrolysis of glutamine to ammonia, which is used by the large (or ammonia) chain to synthesize carbamoyl phosphate. Tetramer of heterodimers (alpha,beta)4.

It carries out the reaction hydrogencarbonate + L-glutamine + 2 ATP + H2O = carbamoyl phosphate + L-glutamate + 2 ADP + phosphate + 2 H(+). It catalyses the reaction L-glutamine + H2O = L-glutamate + NH4(+). It participates in amino-acid biosynthesis; L-arginine biosynthesis; carbamoyl phosphate from bicarbonate: step 1/1. It functions in the pathway pyrimidine metabolism; UMP biosynthesis via de novo pathway; (S)-dihydroorotate from bicarbonate: step 1/3. Small subunit of the glutamine-dependent carbamoyl phosphate synthetase (CPSase). CPSase catalyzes the formation of carbamoyl phosphate from the ammonia moiety of glutamine, carbonate, and phosphate donated by ATP, constituting the first step of 2 biosynthetic pathways, one leading to arginine and/or urea and the other to pyrimidine nucleotides. The small subunit (glutamine amidotransferase) binds and cleaves glutamine to supply the large subunit with the substrate ammonia. This is Carbamoyl phosphate synthase small chain from Akkermansia muciniphila (strain ATCC BAA-835 / DSM 22959 / JCM 33894 / BCRC 81048 / CCUG 64013 / CIP 107961 / Muc).